Here is a 465-residue protein sequence, read N- to C-terminus: Cysteine--tRNA ligase (465 aa).

Cys27 is a binding site for Zn(2+). The short motif at 29–39 (PTVYDEVHIGH) is the 'HIGH' region element. Residues Cys204, His229, and Glu233 each contribute to the Zn(2+) site. Positions 261 to 265 (KMSKS) match the 'KMSKS' region motif. Position 264 (Lys264) interacts with ATP.

It belongs to the class-I aminoacyl-tRNA synthetase family. Zn(2+) serves as cofactor.

Its subcellular location is the cytoplasm. The catalysed reaction is tRNA(Cys) + L-cysteine + ATP = L-cysteinyl-tRNA(Cys) + AMP + diphosphate. The protein is Cysteine--tRNA ligase of Metallosphaera sedula (strain ATCC 51363 / DSM 5348 / JCM 9185 / NBRC 15509 / TH2).